Reading from the N-terminus, the 610-residue chain is DNA-directed RNA polymerase III subunit RPC3 (610 aa).

The interval Leu-538–Leu-559 is leucine-zipper.

This sequence belongs to the RNA polymerase beta chain family. As to quaternary structure, component of the RNA polymerase III (Pol III) complex consisting of 17 subunits.

Its subcellular location is the nucleus. Its function is as follows. DNA-dependent RNA polymerase catalyzes the transcription of DNA into RNA using the four ribonucleoside triphosphates as substrates. Specific core component of RNA polymerase III which synthesizes small RNAs, such as 5S rRNA and tRNAs. This is DNA-directed RNA polymerase III subunit RPC3 (RPC82) from Lodderomyces elongisporus (strain ATCC 11503 / CBS 2605 / JCM 1781 / NBRC 1676 / NRRL YB-4239) (Yeast).